Consider the following 283-residue polypeptide: tRNA-cytidine(32) 2-sulfurtransferase (283 aa).

The PP-loop motif motif lies at 37-42 (SGGKDS). [4Fe-4S] cluster is bound by residues C112, C115, and C203.

This sequence belongs to the TtcA family. Homodimer. Mg(2+) serves as cofactor. Requires [4Fe-4S] cluster as cofactor.

The protein localises to the cytoplasm. The enzyme catalyses cytidine(32) in tRNA + S-sulfanyl-L-cysteinyl-[cysteine desulfurase] + AH2 + ATP = 2-thiocytidine(32) in tRNA + L-cysteinyl-[cysteine desulfurase] + A + AMP + diphosphate + H(+). The protein operates within tRNA modification. In terms of biological role, catalyzes the ATP-dependent 2-thiolation of cytidine in position 32 of tRNA, to form 2-thiocytidine (s(2)C32). The sulfur atoms are provided by the cysteine/cysteine desulfurase (IscS) system. This Legionella pneumophila (strain Corby) protein is tRNA-cytidine(32) 2-sulfurtransferase.